The primary structure comprises 457 residues: UDP-N-acetylmuramate--L-alanine ligase (457 aa).

117–123 serves as a coordination point for ATP; it reads GTHGKTT.

The protein belongs to the MurCDEF family.

It is found in the cytoplasm. The catalysed reaction is UDP-N-acetyl-alpha-D-muramate + L-alanine + ATP = UDP-N-acetyl-alpha-D-muramoyl-L-alanine + ADP + phosphate + H(+). Its pathway is cell wall biogenesis; peptidoglycan biosynthesis. Its function is as follows. Cell wall formation. The chain is UDP-N-acetylmuramate--L-alanine ligase from Clostridium kluyveri (strain NBRC 12016).